The sequence spans 262 residues: uncharacterized protein (262 aa).

The a divalent metal cation site is built by His7, His9, Glu98, His138, His162, and Asp212.

Belongs to the metallo-dependent hydrolases superfamily. TatD-type hydrolase family. A divalent metal cation serves as cofactor.

This is an uncharacterized protein from Haemophilus influenzae (strain ATCC 51907 / DSM 11121 / KW20 / Rd).